The following is a 239-amino-acid chain: tRNA1(Val) (adenine(37)-N6)-methyltransferase (239 aa).

The protein belongs to the methyltransferase superfamily. tRNA (adenine-N(6)-)-methyltransferase family.

The protein localises to the cytoplasm. It catalyses the reaction adenosine(37) in tRNA1(Val) + S-adenosyl-L-methionine = N(6)-methyladenosine(37) in tRNA1(Val) + S-adenosyl-L-homocysteine + H(+). In terms of biological role, specifically methylates the adenine in position 37 of tRNA(1)(Val) (anticodon cmo5UAC). This chain is tRNA1(Val) (adenine(37)-N6)-methyltransferase, found in Vibrio vulnificus (strain CMCP6).